A 315-amino-acid chain; its full sequence is Porphobilinogen deaminase (315 aa).

Cys241 is subject to S-(dipyrrolylmethanemethyl)cysteine.

This sequence belongs to the HMBS family. In terms of assembly, monomer. It depends on dipyrromethane as a cofactor.

The catalysed reaction is 4 porphobilinogen + H2O = hydroxymethylbilane + 4 NH4(+). It functions in the pathway porphyrin-containing compound metabolism; protoporphyrin-IX biosynthesis; coproporphyrinogen-III from 5-aminolevulinate: step 2/4. Tetrapolymerization of the monopyrrole PBG into the hydroxymethylbilane pre-uroporphyrinogen in several discrete steps. In Nitratidesulfovibrio vulgaris (strain DP4) (Desulfovibrio vulgaris), this protein is Porphobilinogen deaminase.